The sequence spans 381 residues: E3 ubiquitin-protein ligase KCMF1 (381 aa).

Position 2 is an N-acetylserine (Ser-2). Ser-2 is modified (phosphoserine). Residues 4–60 (HEGVSCDACLKGNFRGRRYKCLICYDYDLCASCYESGATTTRHTTDHPMQCILTRVD) form a ZZ-type zinc finger. Positions 9, 12, 24, 27, 33, 36, 46, and 50 each coordinate Zn(2+). The C2H2-type zinc-finger motif lies at 78–101 (FTCPYCGKMGYTETSLQEHVTSEH). A disordered region spans residues 154–194 (MFHPGRGLGGPRARRSNMHFTSSSTGGLSSSQSSYSPSSRE). A phosphoserine mark is found at Ser-169, Ser-189, and Ser-212. The span at 175-192 (SSSTGGLSSSQSSYSPSS) shows a compositional bias: low complexity. Positions 224–259 (ASQLQQLQMQLQLERQHAQAARQQLETARNASRRTN) form a coiled coil. 2 positions are modified to phosphoserine: Ser-335 and Ser-336.

Belongs to the KCMF1 family. Component of the SIFI complex, composed of KCMF1, UBR4 and calmodulin (CALM1, CALM2 or CALM3). In terms of tissue distribution, testis, liver, kidney, heart and skeletal muscle.

Its subcellular location is the cytoplasm. It localises to the late endosome. The protein localises to the lysosome. The catalysed reaction is S-ubiquitinyl-[E2 ubiquitin-conjugating enzyme]-L-cysteine + [acceptor protein]-L-lysine = [E2 ubiquitin-conjugating enzyme]-L-cysteine + N(6)-ubiquitinyl-[acceptor protein]-L-lysine.. It functions in the pathway protein modification; protein ubiquitination. In terms of biological role, E3 ubiquitin-protein ligase which accepts ubiquitin from an E2 ubiquitin-conjugating enzyme and then transfers it to targeted substrates, promoting their degradation by the proteasome. Together with UBR4, component of the N-end rule pathway: ubiquitinates proteins bearing specific N-terminal residues that are destabilizing according to the N-end rule, leading to their degradation. Does not ubiquitinate proteins that are acetylated at the N-terminus. Together with UBR4, part of a protein quality control pathway that catalyzes ubiquitination and degradation of proteins that have been oxidized in response to reactive oxygen species (ROS): recognizes proteins with an Arg-CysO3(H) degron at the N-terminus, and mediates assembly of heterotypic 'Lys-63'-/'Lys-27'-linked branched ubiquitin chains on oxidized proteins, leading to their degradation by autophagy. Catalytic component of the SIFI complex, a multiprotein complex required to inhibit the mitochondrial stress response after a specific stress event has been resolved: ubiquitinates and degrades (1) components of the HRI-mediated signaling of the integrated stress response, such as DELE1 and EIF2AK1/HRI, as well as (2) unimported mitochondrial precursors. Within the SIFI complex, UBR4 initiates ubiquitin chain that are further elongated or branched by KCMF1. The sequence is that of E3 ubiquitin-protein ligase KCMF1 from Mus musculus (Mouse).